Here is a 160-residue protein sequence, read N- to C-terminus: 2-C-methyl-D-erythritol 2,4-cyclodiphosphate synthase (160 aa).

Asp9 and His11 together coordinate a divalent metal cation. Residues 9 to 11 (DVH) and 35 to 36 (HS) each bind 4-CDP-2-C-methyl-D-erythritol 2-phosphate. His43 contributes to the a divalent metal cation binding site. 4-CDP-2-C-methyl-D-erythritol 2-phosphate is bound by residues 57–59 (DIG), 62–66 (FPDND), and Phe140.

This sequence belongs to the IspF family. Homotrimer. Requires a divalent metal cation as cofactor.

The catalysed reaction is 4-CDP-2-C-methyl-D-erythritol 2-phosphate = 2-C-methyl-D-erythritol 2,4-cyclic diphosphate + CMP. It participates in isoprenoid biosynthesis; isopentenyl diphosphate biosynthesis via DXP pathway; isopentenyl diphosphate from 1-deoxy-D-xylulose 5-phosphate: step 4/6. In terms of biological role, involved in the biosynthesis of isopentenyl diphosphate (IPP) and dimethylallyl diphosphate (DMAPP), two major building blocks of isoprenoid compounds. Catalyzes the conversion of 4-diphosphocytidyl-2-C-methyl-D-erythritol 2-phosphate (CDP-ME2P) to 2-C-methyl-D-erythritol 2,4-cyclodiphosphate (ME-CPP) with a corresponding release of cytidine 5-monophosphate (CMP). This Fusobacterium nucleatum subsp. nucleatum (strain ATCC 25586 / DSM 15643 / BCRC 10681 / CIP 101130 / JCM 8532 / KCTC 2640 / LMG 13131 / VPI 4355) protein is 2-C-methyl-D-erythritol 2,4-cyclodiphosphate synthase.